A 734-amino-acid chain; its full sequence is Photosystem I P700 chlorophyll a apoprotein A2 (734 aa).

Transmembrane regions (helical) follow at residues 46–69 (IFASHFGQLAIIFLWTSGNLFHVA), 135–158 (LYTGALFLLFLSAISLIGGWLHLQ), 175–199 (LNHHLSGLFGVSSLAWTGHLVHVAI), 273–291 (IAHHHLAIAILFLIAGHMY), 330–353 (IHFQLGLALASLGVITSLVAQHMY), 369–395 (AALYTHHQYIAGFIMTGAFAHGAIFFI), 417–439 (AIISHLSWASLFLGFHTLGLYVH), and 517–535 (FLVHHAIALGLHTTTLILV). [4Fe-4S] cluster-binding residues include Cys-559 and Cys-568. 2 helical membrane-spanning segments follow: residues 575 to 596 (AFYLAVFWMLNTIGWVTFYWHW) and 643 to 665 (LSVWAWMFLFGHLVWATGFMFLI). 3 residues coordinate chlorophyll a: His-654, Met-662, and Tyr-670. Trp-671 provides a ligand contact to phylloquinone. The helical transmembrane segment at 707-727 (LVGLAHFSVGYIFTYAAFLIA) threads the bilayer.

This sequence belongs to the PsaA/PsaB family. In terms of assembly, the PsaA/B heterodimer binds the P700 chlorophyll special pair and subsequent electron acceptors. PSI consists of a core antenna complex that captures photons, and an electron transfer chain that converts photonic excitation into a charge separation. The eukaryotic PSI reaction center is composed of at least 11 subunits. It depends on P700 is a chlorophyll a/chlorophyll a' dimer, A0 is one or more chlorophyll a, A1 is one or both phylloquinones and FX is a shared 4Fe-4S iron-sulfur center. as a cofactor.

The protein localises to the plastid. Its subcellular location is the chloroplast thylakoid membrane. It catalyses the reaction reduced [plastocyanin] + hnu + oxidized [2Fe-2S]-[ferredoxin] = oxidized [plastocyanin] + reduced [2Fe-2S]-[ferredoxin]. Its function is as follows. PsaA and PsaB bind P700, the primary electron donor of photosystem I (PSI), as well as the electron acceptors A0, A1 and FX. PSI is a plastocyanin-ferredoxin oxidoreductase, converting photonic excitation into a charge separation, which transfers an electron from the donor P700 chlorophyll pair to the spectroscopically characterized acceptors A0, A1, FX, FA and FB in turn. Oxidized P700 is reduced on the lumenal side of the thylakoid membrane by plastocyanin. The chain is Photosystem I P700 chlorophyll a apoprotein A2 from Aethionema cordifolium (Lebanon stonecress).